Reading from the N-terminus, the 476-residue chain is Aspartyl/glutamyl-tRNA(Asn/Gln) amidotransferase subunit B (476 aa).

It belongs to the GatB/GatE family. GatB subfamily. In terms of assembly, heterotrimer of A, B and C subunits.

The enzyme catalyses L-glutamyl-tRNA(Gln) + L-glutamine + ATP + H2O = L-glutaminyl-tRNA(Gln) + L-glutamate + ADP + phosphate + H(+). It catalyses the reaction L-aspartyl-tRNA(Asn) + L-glutamine + ATP + H2O = L-asparaginyl-tRNA(Asn) + L-glutamate + ADP + phosphate + 2 H(+). Its function is as follows. Allows the formation of correctly charged Asn-tRNA(Asn) or Gln-tRNA(Gln) through the transamidation of misacylated Asp-tRNA(Asn) or Glu-tRNA(Gln) in organisms which lack either or both of asparaginyl-tRNA or glutaminyl-tRNA synthetases. The reaction takes place in the presence of glutamine and ATP through an activated phospho-Asp-tRNA(Asn) or phospho-Glu-tRNA(Gln). The protein is Aspartyl/glutamyl-tRNA(Asn/Gln) amidotransferase subunit B of Listeria monocytogenes serotype 4b (strain CLIP80459).